A 659-amino-acid polypeptide reads, in one-letter code: 3-hydroxypropionyl-coenzyme A synthetase (659 aa).

D525 is a catalytic residue. K616 is modified (N6-acetyllysine).

Belongs to the ATP-dependent AMP-binding enzyme family.

It carries out the reaction 3-hydroxypropanoate + ATP + CoA = 3-hydroxypropanoyl-CoA + AMP + diphosphate. In terms of biological role, plays a role in the autotrophic CO(2) fixation pathway. Activates 3-hydroxypropionate to its CoA ester. Can also activate propionate, and to a lesser extent acrylate, acetate and butyrate. The polypeptide is 3-hydroxypropionyl-coenzyme A synthetase (Sulfurisphaera tokodaii (strain DSM 16993 / JCM 10545 / NBRC 100140 / 7) (Sulfolobus tokodaii)).